A 465-amino-acid polypeptide reads, in one-letter code: Tubulin gamma chain (465 aa).

Residue 144–150 coordinates GTP; it reads AGGTGSG.

The protein belongs to the tubulin family.

The protein resides in the cytoplasm. It is found in the cytoskeleton. The protein localises to the microtubule organizing center. Its subcellular location is the spindle pole body. Tubulin is the major constituent of microtubules. The gamma chain is found at microtubule organizing centers (MTOC) such as the spindle poles or the centrosome, suggesting that it is involved in the minus-end nucleation of microtubule assembly. The chain is Tubulin gamma chain (TUB4) from Candida glabrata (strain ATCC 2001 / BCRC 20586 / JCM 3761 / NBRC 0622 / NRRL Y-65 / CBS 138) (Yeast).